A 509-amino-acid chain; its full sequence is Putative thymidine phosphorylase (509 aa).

The protein belongs to the thymidine/pyrimidine-nucleoside phosphorylase family. Type 2 subfamily.

It catalyses the reaction thymidine + phosphate = 2-deoxy-alpha-D-ribose 1-phosphate + thymine. The polypeptide is Putative thymidine phosphorylase (Chelativorans sp. (strain BNC1)).